Consider the following 584-residue polypeptide: Arginine--tRNA ligase (584 aa).

Residues 130–140 (PNVAKEMHVGH) carry the 'HIGH' region motif.

It belongs to the class-I aminoacyl-tRNA synthetase family. As to quaternary structure, monomer.

The protein localises to the cytoplasm. The enzyme catalyses tRNA(Arg) + L-arginine + ATP = L-arginyl-tRNA(Arg) + AMP + diphosphate. In Protochlamydia amoebophila (strain UWE25), this protein is Arginine--tRNA ligase.